Consider the following 101-residue polypeptide: Small ribosomal subunit protein uS14 (101 aa).

The protein belongs to the universal ribosomal protein uS14 family. Part of the 30S ribosomal subunit. Contacts proteins S3 and S10.

Functionally, binds 16S rRNA, required for the assembly of 30S particles and may also be responsible for determining the conformation of the 16S rRNA at the A site. The chain is Small ribosomal subunit protein uS14 from Caulobacter vibrioides (strain ATCC 19089 / CIP 103742 / CB 15) (Caulobacter crescentus).